We begin with the raw amino-acid sequence, 438 residues long: GTPase Der (438 aa).

2 consecutive EngA-type G domains span residues 4–168 and 177–352; these read PIVA…PEGN and IRIA…GNYC. Residues 10–17, 57–61, 120–123, 183–190, 230–234, and 295–298 contribute to the GTP site; these read GRPNVGKS, DTGGI, NKID, DTAGL, and NKWD. Residues 353–437 enclose the KH-like domain; that stretch reads KRIKTGILND…GIKLEFRERK (85 aa).

It belongs to the TRAFAC class TrmE-Era-EngA-EngB-Septin-like GTPase superfamily. EngA (Der) GTPase family. In terms of assembly, associates with the 50S ribosomal subunit.

In terms of biological role, GTPase that plays an essential role in the late steps of ribosome biogenesis. This Clostridium novyi (strain NT) protein is GTPase Der.